A 340-amino-acid chain; its full sequence is Protein-arginine kinase (340 aa).

Residues Ile-14–Ser-244 enclose the Phosphagen kinase C-terminal domain. ATP contacts are provided by residues Thr-17–Arg-21, His-81, Arg-115, Arg-166–Met-170, and Arg-197–Glu-202.

This sequence belongs to the ATP:guanido phosphotransferase family.

It carries out the reaction L-arginyl-[protein] + ATP = N(omega)-phospho-L-arginyl-[protein] + ADP + H(+). Functionally, catalyzes the specific phosphorylation of arginine residues in proteins. In Clostridium acetobutylicum (strain ATCC 824 / DSM 792 / JCM 1419 / IAM 19013 / LMG 5710 / NBRC 13948 / NRRL B-527 / VKM B-1787 / 2291 / W), this protein is Protein-arginine kinase.